Here is a 1180-residue protein sequence, read N- to C-terminus: Lon protease homolog 2, peroxisomal (1180 aa).

The Lon N-terminal domain maps to 19-366; that stretch reads LPTCKLDSNL…ELINMINQLI (348 aa). Positions 416–465 are disordered; sequence PISNRGNIKSFNNSENGNNNKTNGSGITSRRPKSNEDGGEVYDEEDDDEE. The span at 422-444 shows a compositional bias: low complexity; the sequence is NIKSFNNSENGNNNKTNGSGITS. A compositionally biased stretch (acidic residues) spans 452–465; sequence DGGEVYDEEDDDEE. 667–674 is a binding site for ATP; that stretch reads GPPGTGKT. The Lon proteolytic domain occupies 924–1163; sequence NSRVGIVNGL…YDVMKILWGE (240 aa). Catalysis depends on residues Ser1032 and Lys1075.

It belongs to the peptidase S16 family.

The protein resides in the peroxisome matrix. It catalyses the reaction Hydrolysis of proteins in presence of ATP.. Functionally, ATP-dependent serine protease that mediates the selective degradation of misfolded and unassembled polypeptides in the peroxisomal matrix. Necessary for type 2 peroxisome targeting signal (PTS2)-containing protein processing and facilitates peroxisome matrix protein import. The polypeptide is Lon protease homolog 2, peroxisomal (Scheffersomyces stipitis (strain ATCC 58785 / CBS 6054 / NBRC 10063 / NRRL Y-11545) (Yeast)).